The primary structure comprises 206 residues: Cytidylate kinase (206 aa).

Gly7–Thr15 is a binding site for ATP.

The protein belongs to the cytidylate kinase family. Type 1 subfamily.

Its subcellular location is the cytoplasm. It carries out the reaction CMP + ATP = CDP + ADP. The catalysed reaction is dCMP + ATP = dCDP + ADP. This is Cytidylate kinase from Azorhizobium caulinodans (strain ATCC 43989 / DSM 5975 / JCM 20966 / LMG 6465 / NBRC 14845 / NCIMB 13405 / ORS 571).